Consider the following 443-residue polypeptide: MQPRNNDILTPSQLNTLARDLLEGSFPAIWVEAELGSVARPSSGHLYFTLKDARAQLRAAMFRMKAQYLKFVPREGMRVLVRGKVTLYDARGEYQMVLDHMEEAGEGALRRAFEELKARLEAEGLFDQARKRPMPAHVQRLAVITSPTGAAVRDVLSVLGRRFPLLEVDLLPTLVQGNSAAAQITRLLQAADASGRYDVILLTRGGGSLEDLWAFNDEALARAIAASRTPVVSAVGHETDFSLSDFAADLRAPTPSVAAELLVPDQRELALRLRRNAARMVQLQRHTMQQAMQRADRALLRLNAQSPQARLDLLRRRQLDLGRRLHAAFNQQQERRAARLRHAAAILRGHHPQRQLDAMQRRLAALRGRPQIAMQRLLERDALRLRGLARSLEAVSPLATVARGYSILTRSDDGTLVRQVDQVQPGDALQARVGDGVIDVQVK.

Belongs to the XseA family. Heterooligomer composed of large and small subunits.

The protein localises to the cytoplasm. The catalysed reaction is Exonucleolytic cleavage in either 5'- to 3'- or 3'- to 5'-direction to yield nucleoside 5'-phosphates.. Its function is as follows. Bidirectionally degrades single-stranded DNA into large acid-insoluble oligonucleotides, which are then degraded further into small acid-soluble oligonucleotides. The polypeptide is Exodeoxyribonuclease 7 large subunit (Stenotrophomonas maltophilia (strain R551-3)).